We begin with the raw amino-acid sequence, 425 residues long: Enolase (425 aa).

Gln-163 serves as a coordination point for (2R)-2-phosphoglycerate. Catalysis depends on Glu-205, which acts as the Proton donor. The Mg(2+) site is built by Asp-242, Glu-285, and Asp-312. The (2R)-2-phosphoglycerate site is built by Lys-337, Arg-366, Ser-367, and Lys-388. The Proton acceptor role is filled by Lys-337.

Belongs to the enolase family. It depends on Mg(2+) as a cofactor.

Its subcellular location is the cytoplasm. The protein resides in the secreted. It is found in the cell surface. The enzyme catalyses (2R)-2-phosphoglycerate = phosphoenolpyruvate + H2O. The protein operates within carbohydrate degradation; glycolysis; pyruvate from D-glyceraldehyde 3-phosphate: step 4/5. Its function is as follows. Catalyzes the reversible conversion of 2-phosphoglycerate (2-PG) into phosphoenolpyruvate (PEP). It is essential for the degradation of carbohydrates via glycolysis. The protein is Enolase of Cereibacter sphaeroides (strain ATCC 17029 / ATH 2.4.9) (Rhodobacter sphaeroides).